Consider the following 205-residue polypeptide: Casparian strip membrane protein 4 (205 aa).

The Cytoplasmic portion of the chain corresponds to 1-58 (MDIEKTGSRREEEEPIVQKPKLEKGKGKAHVFAPPMNYSRIMEKHKQEKVSMAGWKRG). A helical transmembrane segment spans residues 59–79 (VAIFDFVLRLIAAITAMAAAA). Residues 80-109 (KMATTEETLPFFTQFLQFSADYTDLPTLSS) are Extracellular-facing. The chain crosses the membrane as a helical span at residues 110–130 (FVIVNSIVGGYLTLSLPFSIV). Residues 131-148 (CILRPLAVPPRLFLILCD) are Cytoplasmic-facing. Residues 149 to 169 (TAMMGLTMVAASASAAIVYLA) traverse the membrane as a helical segment. Residues 170–205 (HNGNSSSNWLPVCQQFGDFCKERVAPWWLPLLQRLF) lie on the Extracellular side of the membrane. An N-linked (GlcNAc...) asparagine glycan is attached at Asn-173.

The protein belongs to the Casparian strip membrane proteins (CASP) family. Homodimer and heterodimers.

It localises to the cell membrane. Its function is as follows. Regulates membrane-cell wall junctions and localized cell wall deposition. Required for establishment of the Casparian strip membrane domain (CSD) and the subsequent formation of Casparian strips, a cell wall modification of the root endodermis that determines an apoplastic barrier between the intraorganismal apoplasm and the extraorganismal apoplasm and prevents lateral diffusion. In Raphanus sativus (Radish), this protein is Casparian strip membrane protein 4.